Here is a 310-residue protein sequence, read N- to C-terminus: 4-hydroxyproline 2-epimerase (310 aa).

The Proton acceptor role is filled by cysteine 88. Residues 89–90 (GH), histidine 208, and aspartate 232 each bind substrate. Cysteine 236 serves as the catalytic Proton donor. Residue 237–238 (GT) participates in substrate binding.

This sequence belongs to the proline racemase family.

The enzyme catalyses trans-4-hydroxy-L-proline = cis-4-hydroxy-D-proline. In terms of biological role, catalyzes the epimerization of trans-4-hydroxy-L-proline (t4LHyp) to cis-4-hydroxy-D-proline (c4DHyp). Is likely involved in a degradation pathway that converts t4LHyp to alpha-ketoglutarate. Can also catalyze the dehydration of trans-3-hydroxy-L-proline (t3LHyp) to Delta(1)-pyrroline-2-carboxylate (Pyr2C), albeit with 42-fold lower efficiency. Displays no proline racemase activity. In Burkholderia thailandensis (strain ATCC 700388 / DSM 13276 / CCUG 48851 / CIP 106301 / E264), this protein is 4-hydroxyproline 2-epimerase.